The sequence spans 202 residues: Dephospho-CoA kinase (202 aa).

The region spanning valine 4 to asparagine 201 is the DPCK domain. ATP is bound at residue alanine 12–threonine 17.

This sequence belongs to the CoaE family.

The protein localises to the cytoplasm. It carries out the reaction 3'-dephospho-CoA + ATP = ADP + CoA + H(+). It functions in the pathway cofactor biosynthesis; coenzyme A biosynthesis; CoA from (R)-pantothenate: step 5/5. Catalyzes the phosphorylation of the 3'-hydroxyl group of dephosphocoenzyme A to form coenzyme A. The protein is Dephospho-CoA kinase of Vibrio vulnificus (strain CMCP6).